Reading from the N-terminus, the 466-residue chain is ATP synthase subunit beta (466 aa).

156 to 163 lines the ATP pocket; it reads GGAGVGKT.

This sequence belongs to the ATPase alpha/beta chains family. As to quaternary structure, F-type ATPases have 2 components, CF(1) - the catalytic core - and CF(0) - the membrane proton channel. CF(1) has five subunits: alpha(3), beta(3), gamma(1), delta(1), epsilon(1). CF(0) has three main subunits: a(1), b(2) and c(9-12). The alpha and beta chains form an alternating ring which encloses part of the gamma chain. CF(1) is attached to CF(0) by a central stalk formed by the gamma and epsilon chains, while a peripheral stalk is formed by the delta and b chains.

Its subcellular location is the cell inner membrane. The enzyme catalyses ATP + H2O + 4 H(+)(in) = ADP + phosphate + 5 H(+)(out). In terms of biological role, produces ATP from ADP in the presence of a proton gradient across the membrane. The catalytic sites are hosted primarily by the beta subunits. This is ATP synthase subunit beta from Polynucleobacter necessarius subsp. necessarius (strain STIR1).